Here is a 57-residue protein sequence, read N- to C-terminus: UPF0391 membrane protein XC_2938 (57 aa).

2 consecutive transmembrane segments (helical) span residues 4-24 (WAIIFAIIGLIAGALGFGGMA) and 33-53 (FLFWAGIIIAIVLFVLGMTIA).

This sequence belongs to the UPF0391 family.

The protein localises to the cell membrane. The chain is UPF0391 membrane protein XC_2938 from Xanthomonas campestris pv. campestris (strain 8004).